A 389-amino-acid polypeptide reads, in one-letter code: Glutamate 5-kinase (389 aa).

K16 is an ATP binding site. Substrate-binding residues include S56, D143, and N155. 175–176 (SD) provides a ligand contact to ATP. In terms of domain architecture, PUA spans 281–358 (AGELHVDDGA…AEIEAILGYA (78 aa)).

Belongs to the glutamate 5-kinase family.

It is found in the cytoplasm. It catalyses the reaction L-glutamate + ATP = L-glutamyl 5-phosphate + ADP. It functions in the pathway amino-acid biosynthesis; L-proline biosynthesis; L-glutamate 5-semialdehyde from L-glutamate: step 1/2. Functionally, catalyzes the transfer of a phosphate group to glutamate to form L-glutamate 5-phosphate. This chain is Glutamate 5-kinase, found in Rhizobium etli (strain CIAT 652).